The chain runs to 37 residues: Large ribosomal subunit protein bL36 (37 aa).

This sequence belongs to the bacterial ribosomal protein bL36 family.

The chain is Large ribosomal subunit protein bL36 from Halorhodospira halophila (strain DSM 244 / SL1) (Ectothiorhodospira halophila (strain DSM 244 / SL1)).